The chain runs to 212 residues: MSATALGMIIFAYLCGSISSAILVCRIARLPDPRENGSGNPGATNVLRIGGRVAAAAVLVFDILKGMLPVWLAYKLDVPPLYLGLTAIAACLGHIYPVFFHFRGGKGVATAFGAIAPIGWDLTGLMTGTWLLTVLLSGYSSLGAIISALIAPFYVWWFKPQFTFPVAMLSCLILMRHHDNIQRLWRGQEGKIWGVFRKKKNDAAEQEEKKEE.

The next 5 membrane-spanning stretches (helical) occupy residues 5-25 (ALGMIIFAYLCGSISSAILVC), 53-73 (VAAAAVLVFDILKGMLPVWLA), 80-100 (PLYLGLTAIAACLGHIYPVFF), 112-132 (FGAIAPIGWDLTGLMTGTWLL), and 138-158 (GYSSLGAIISALIAPFYVWWF).

The protein belongs to the PlsY family. Probably interacts with PlsX.

Its subcellular location is the cell inner membrane. The enzyme catalyses an acyl phosphate + sn-glycerol 3-phosphate = a 1-acyl-sn-glycero-3-phosphate + phosphate. The protein operates within lipid metabolism; phospholipid metabolism. Its function is as follows. Catalyzes the transfer of an acyl group from acyl-phosphate (acyl-PO(4)) to glycerol-3-phosphate (G3P) to form lysophosphatidic acid (LPA). This enzyme utilizes acyl-phosphate as fatty acyl donor, but not acyl-CoA or acyl-ACP. The protein is Glycerol-3-phosphate acyltransferase of Serratia proteamaculans (strain 568).